A 234-amino-acid chain; its full sequence is Protein spitz (234 aa).

A signal peptide spans 1–28; sequence MHSTMSVQHGLVALVLIGCLAHPWHVEA. Residues 29–143 lie on the Lumenal side of the membrane; the sequence is CSSRTVPKPR…RPRPMLEKAS (115 aa). The disordered stretch occupies residues 33–71; the sequence is TVPKPRSSISSSMSGTALPPTQAPVTSSTTMRTTTTTTP. Residues 56–71 are compositionally biased toward low complexity; it reads PVTSSTTMRTTTTTTP. Asn-74 carries N-linked (GlcNAc...) asparagine glycosylation. Residues 78–122 enclose the EGF-like domain; sequence PTYKCPETFDAWYCLNDAHCFAVKIADLPVYSCECAIGFMGQRCE. 3 disulfide bridges follow: Cys-82–Cys-97, Cys-91–Cys-110, and Cys-112–Cys-121. A helical membrane pass occupies residues 144–164; that stretch reads IASGAMCALVFMLFVCLAFYL. Residues 165 to 234 are Cytoplasmic-facing; the sequence is RFEQRAAKKA…SFAIRRSNKL (70 aa).

In terms of assembly, interacts with Star via the lumenal domain. Proteolytic processing by Rhomboid occurs in the Golgi. Cleavage takes place within the transmembrane domain close to residue 144 and the active growth factor is released. In terms of processing, N-glycosylated and O-glycosylated. In terms of tissue distribution, expressed throughout the embryo.

Its subcellular location is the cell membrane. It localises to the endoplasmic reticulum membrane. The protein localises to the golgi apparatus membrane. Ligand for the EGF receptor (Gurken). Involved in a number of unrelated developmental choices, for example, dorsal-ventral axis formation, glial migration, sensory organ determination, and muscle development. It is required for photoreceptor determination. The sequence is that of Protein spitz (spi) from Drosophila melanogaster (Fruit fly).